Consider the following 367-residue polypeptide: Alanine racemase (367 aa).

Lysine 40 (proton acceptor; specific for D-alanine) is an active-site residue. Residue lysine 40 is modified to N6-(pyridoxal phosphate)lysine. Arginine 136 contributes to the substrate binding site. Tyrosine 263 acts as the Proton acceptor; specific for L-alanine in catalysis. Methionine 310 is a binding site for substrate.

It belongs to the alanine racemase family. It depends on pyridoxal 5'-phosphate as a cofactor.

It catalyses the reaction L-alanine = D-alanine. Its pathway is amino-acid biosynthesis; D-alanine biosynthesis; D-alanine from L-alanine: step 1/1. Catalyzes the interconversion of L-alanine and D-alanine. May also act on other amino acids. The protein is Alanine racemase (alr) of Streptococcus suis (strain 98HAH33).